The sequence spans 271 residues: Cytosolic Fe-S cluster assembly factor NUBP2 (271 aa).

M1 bears the N-acetylmethionine mark. ATP is bound at residue 22 to 29 (GKGGVGKS). Positions 196 and 199 each coordinate [4Fe-4S] cluster.

Belongs to the Mrp/NBP35 ATP-binding proteins family. NUBP2/CFD1 subfamily. Heterotetramer of 2 NUBP1 and 2 NUBP2 chains. Interacts with KIFC1. Interacts with NUBP1. It depends on [4Fe-4S] cluster as a cofactor. Widely expressed with highest expression in skeletal muscle.

It localises to the nucleus. It is found in the cytoplasm. Its subcellular location is the cytoskeleton. The protein resides in the microtubule organizing center. The protein localises to the centrosome. It localises to the cilium axoneme. It is found in the centriole. Functionally, component of the cytosolic iron-sulfur (Fe/S) protein assembly (CIA) machinery. Required for maturation of extramitochondrial Fe-S proteins. The NUBP1-NUBP2 heterotetramer forms a Fe-S scaffold complex, mediating the de novo assembly of an Fe-S cluster and its transfer to target apoproteins. Negatively regulates cilium formation and structure. In Homo sapiens (Human), this protein is Cytosolic Fe-S cluster assembly factor NUBP2.